A 164-amino-acid chain; its full sequence is Xanthine-guanine phosphoribosyltransferase (164 aa).

5-phospho-alpha-D-ribose 1-diphosphate is bound by residues 41 to 42 (RG) and 98 to 106 (DDLTDTGKT). Residue aspartate 99 coordinates Mg(2+). 2 residues coordinate guanine: aspartate 102 and isoleucine 145. Xanthine-binding residues include aspartate 102 and isoleucine 145. GMP contacts are provided by residues 102-106 (DTGKT) and 144-145 (WI).

It belongs to the purine/pyrimidine phosphoribosyltransferase family. XGPT subfamily. In terms of assembly, homotetramer. The cofactor is Mg(2+).

Its subcellular location is the cell inner membrane. The catalysed reaction is GMP + diphosphate = guanine + 5-phospho-alpha-D-ribose 1-diphosphate. It carries out the reaction XMP + diphosphate = xanthine + 5-phospho-alpha-D-ribose 1-diphosphate. It catalyses the reaction IMP + diphosphate = hypoxanthine + 5-phospho-alpha-D-ribose 1-diphosphate. The protein operates within purine metabolism; GMP biosynthesis via salvage pathway; GMP from guanine: step 1/1. It participates in purine metabolism; XMP biosynthesis via salvage pathway; XMP from xanthine: step 1/1. Functionally, purine salvage pathway enzyme that catalyzes the transfer of the ribosyl-5-phosphate group from 5-phospho-alpha-D-ribose 1-diphosphate (PRPP) to the N9 position of the 6-oxopurines guanine and xanthine to form the corresponding ribonucleotides GMP (guanosine 5'-monophosphate) and XMP (xanthosine 5'-monophosphate), with the release of PPi. To a lesser extent, also acts on hypoxanthine. The polypeptide is Xanthine-guanine phosphoribosyltransferase (Rhizobium johnstonii (strain DSM 114642 / LMG 32736 / 3841) (Rhizobium leguminosarum bv. viciae)).